We begin with the raw amino-acid sequence, 218 residues long: Octanoyltransferase (218 aa).

The region spanning 32–214 (VLTADEIWLV…HFTQLLGYND (183 aa)) is the BPL/LPL catalytic domain. Residues 71 to 78 (RGGQITYH), 143 to 145 (SLG), and 156 to 158 (GLA) each bind substrate. C174 acts as the Acyl-thioester intermediate in catalysis.

Belongs to the LipB family.

The protein localises to the cytoplasm. It carries out the reaction octanoyl-[ACP] + L-lysyl-[protein] = N(6)-octanoyl-L-lysyl-[protein] + holo-[ACP] + H(+). It participates in protein modification; protein lipoylation via endogenous pathway; protein N(6)-(lipoyl)lysine from octanoyl-[acyl-carrier-protein]: step 1/2. Its function is as follows. Catalyzes the transfer of endogenously produced octanoic acid from octanoyl-acyl-carrier-protein onto the lipoyl domains of lipoate-dependent enzymes. Lipoyl-ACP can also act as a substrate although octanoyl-ACP is likely to be the physiological substrate. This chain is Octanoyltransferase, found in Histophilus somni (strain 2336) (Haemophilus somnus).